A 193-amino-acid polypeptide reads, in one-letter code: Thymidine kinase (193 aa).

ATP-binding positions include 16 to 23 (GPMFSGKS) and 89 to 92 (DEIQ). Catalysis depends on E90, which acts as the Proton acceptor. Residues C146, C149, C184, and C187 each coordinate Zn(2+).

The protein belongs to the thymidine kinase family. Homotetramer.

Its subcellular location is the cytoplasm. It catalyses the reaction thymidine + ATP = dTMP + ADP + H(+). In Thermoanaerobacter pseudethanolicus (strain ATCC 33223 / 39E) (Clostridium thermohydrosulfuricum), this protein is Thymidine kinase.